A 324-amino-acid chain; its full sequence is D-alanine--D-alanine ligase (324 aa).

Residues 121–321 form the ATP-grasp domain; it reads NQYLKAFGVR…IKDVMTDIIE (201 aa). 149–204 contacts ATP; it reads VEKIGLPCFIKPNLGGSSFGVTKVKTREQIQPAIAKAFSEAEEVMIEAFMGGTELT. Mg(2+) contacts are provided by Asp-275, Glu-288, and Asn-290.

Belongs to the D-alanine--D-alanine ligase family. Mg(2+) serves as cofactor. Requires Mn(2+) as cofactor.

Its subcellular location is the cytoplasm. The catalysed reaction is 2 D-alanine + ATP = D-alanyl-D-alanine + ADP + phosphate + H(+). It functions in the pathway cell wall biogenesis; peptidoglycan biosynthesis. Functionally, cell wall formation. In Bacteroides fragilis (strain YCH46), this protein is D-alanine--D-alanine ligase.